We begin with the raw amino-acid sequence, 117 residues long: Large ribosomal subunit protein bL19 (117 aa).

Belongs to the bacterial ribosomal protein bL19 family.

Its function is as follows. This protein is located at the 30S-50S ribosomal subunit interface and may play a role in the structure and function of the aminoacyl-tRNA binding site. In Aliivibrio fischeri (strain ATCC 700601 / ES114) (Vibrio fischeri), this protein is Large ribosomal subunit protein bL19.